A 578-amino-acid polypeptide reads, in one-letter code: Glutamate--tRNA ligase (578 aa).

A 'HIGH' region motif is present at residues 97-107 (PNPDFVIHLGN).

The protein belongs to the class-I aminoacyl-tRNA synthetase family. Glutamate--tRNA ligase type 2 subfamily.

It localises to the cytoplasm. The catalysed reaction is tRNA(Glu) + L-glutamate + ATP = L-glutamyl-tRNA(Glu) + AMP + diphosphate. In terms of biological role, catalyzes the attachment of glutamate to tRNA(Glu) in a two-step reaction: glutamate is first activated by ATP to form Glu-AMP and then transferred to the acceptor end of tRNA(Glu). The sequence is that of Glutamate--tRNA ligase from Hyperthermus butylicus (strain DSM 5456 / JCM 9403 / PLM1-5).